The chain runs to 209 residues: MWRMRGGATRRGSCCGGDGAADGRGPGRSGRARGGGSPSGGGGGVGWRGRADGARQQLEERFADLAASHLEAIRARDEWDRQNARLRQENARLRLENRRLKRENRSLFRQALRLPGEGGNGTPAEARRVPEEASTNRRARDSGREDEPGSPRALRARLEKLEAMYRRALLQLHLEQRGPRPSGDKEEQPLQEPDSGLRSRDSEPSGPWL.

Disordered stretches follow at residues 1–55 (MWRM…DGAR), 111–157 (ALRL…LRAR), and 172–209 (LHLEQRGPRPSGDKEEQPLQEPDSGLRSRDSEPSGPWL). A compositionally biased stretch (gly residues) spans 14 to 47 (CCGGDGAADGRGPGRSGRARGGGSPSGGGGGVGW). Positions 70-114 (LEAIRARDEWDRQNARLRQENARLRLENRRLKRENRSLFRQALRL) form a coiled coil. Residues 125–149 (EARRVPEEASTNRRARDSGREDEPG) are compositionally biased toward basic and acidic residues. Position 150 is a phosphoserine (serine 150). Residues 152 to 177 (RALRARLEKLEAMYRRALLQLHLEQR) adopt a coiled-coil conformation. The span at 174–188 (LEQRGPRPSGDKEEQ) shows a compositional bias: basic and acidic residues.

In terms of tissue distribution, widely expressed at low level. Expressed at higher level in testis, weakly expressed in muscle, colon, lung and spleen. Not detected in 3 non small cell lung carcinoma (NSCLC) cell lines with homozygous deletion of the 9p region, while it is down-regulated in 3 other tumor cell lines.

This Homo sapiens (Human) protein is Tumor suppressor candidate gene 1 protein (TUSC1).